A 733-amino-acid chain; its full sequence is Ribosomal protein S6 kinase alpha-2 (733 aa).

Residues 59 to 318 enclose the Protein kinase 1 domain; the sequence is FELLKVLGQG…VEEIKRHPFF (260 aa). ATP-binding positions include 65-73 and Lys91; that span reads LGQGSYGKV. The active-site Proton acceptor is Asp184. Ser218 is subject to Phosphoserine; by PDPK1. One can recognise an AGC-kinase C-terminal domain in the interval 319–388; sequence VTIDWNKLYR…VASSLVQEPS (70 aa). Ser377 carries the phosphoserine modification. Residues 415–672 enclose the Protein kinase 2 domain; the sequence is YEIKEDIGVG…AVQVLKHPWI (258 aa). Residues 421-429 and Lys444 each bind ATP; that span reads IGVGSYSVC. Catalysis depends on Asp532, which acts as the Proton acceptor.

This sequence belongs to the protein kinase superfamily. AGC Ser/Thr protein kinase family. S6 kinase subfamily. As to quaternary structure, forms a complex with either MAPK1/ERK2 or MAPK3/ERK1 in quiescent cells. Transiently dissociates following mitogenic stimulation. Interacts with FBXO5; cooperate to induce the metaphase arrest of early blastomeres; increases and stabilizes interaction of FBXO5 with CDC20. Mg(2+) serves as cofactor. Activated by phosphorylation at Ser-218 by PDPK1. Autophosphorylated on Ser-377, as part of the activation process. May be phosphorylated at Thr-356 and Ser-360 by MAPK1/ERK2 and MAPK3/ERK1. In terms of processing, N-terminal myristoylation results in an activated kinase in the absence of added growth factors.

The protein resides in the nucleus. The protein localises to the cytoplasm. The enzyme catalyses L-seryl-[protein] + ATP = O-phospho-L-seryl-[protein] + ADP + H(+). It carries out the reaction L-threonyl-[protein] + ATP = O-phospho-L-threonyl-[protein] + ADP + H(+). With respect to regulation, upon extracellular signal or mitogen stimulation, phosphorylated at Thr-570 in the C-terminal kinase domain (CTKD) by MAPK1/ERK2 and MAPK3/ERK1. The activated CTKD then autophosphorylates Ser-377, allowing binding of PDPK1, which in turn phosphorylates Ser-218 in the N-terminal kinase domain (NTDK) leading to the full activation of the protein and subsequent phosphorylation of the substrates by the NTKD. Its function is as follows. Serine/threonine-protein kinase that acts downstream of ERK (MAPK1/ERK2 and MAPK3/ERK1) signaling and mediates mitogenic and stress-induced activation of transcription factors, regulates translation, and mediates cellular proliferation, survival, and differentiation. May function as tumor suppressor in epithelial ovarian cancer cells. The chain is Ribosomal protein S6 kinase alpha-2 (Rps6ka2) from Mus musculus (Mouse).